A 139-amino-acid chain; its full sequence is Protein AC53 (139 aa).

It is found in the host cytoplasm. The protein resides in the host nucleus. In terms of biological role, plays a role in nucleocapsid assembly. The protein is Protein AC53 (AC53) of Lepidoptera (butterflies and moths).